Here is a 387-residue protein sequence, read N- to C-terminus: Anhydro-N-acetylmuramic acid kinase (387 aa).

17 to 24 (GTSMDGVD) contributes to the ATP binding site.

The protein belongs to the anhydro-N-acetylmuramic acid kinase family.

The enzyme catalyses 1,6-anhydro-N-acetyl-beta-muramate + ATP + H2O = N-acetyl-D-muramate 6-phosphate + ADP + H(+). The protein operates within amino-sugar metabolism; 1,6-anhydro-N-acetylmuramate degradation. Its pathway is cell wall biogenesis; peptidoglycan recycling. In terms of biological role, catalyzes the specific phosphorylation of 1,6-anhydro-N-acetylmuramic acid (anhMurNAc) with the simultaneous cleavage of the 1,6-anhydro ring, generating MurNAc-6-P. Is required for the utilization of anhMurNAc either imported from the medium or derived from its own cell wall murein, and thus plays a role in cell wall recycling. This chain is Anhydro-N-acetylmuramic acid kinase, found in Burkholderia pseudomallei (strain K96243).